A 259-amino-acid chain; its full sequence is Pycsar effector protein RsmPycTIR (259 aa).

A nucleoside 3',5'-cyclic phosphate is bound at residue 1 to 120 (MVGGDEVIAN…RRVHEDFSGR (120 aa)). The TIR-like stretch occupies residues 126 to 229 (LATGISRRTS…AEFQYQISSS (104 aa)). Transmembrane regions (helical) follow at residues 136–156 (GWNWTVISLTAGVLSAAAIWY), 169–189 (VLLPLVVGLTIFLLTLLADPV), and 234–254 (QATALLAPIVLGALAAYLFWI).

Its subcellular location is the cell inner membrane. It carries out the reaction NAD(+) + H2O = ADP-D-ribose + nicotinamide + H(+). Functionally, pycsar (pyrimidine cyclase system for antiphage resistance) provides immunity against bacteriophage. The pyrimidine cyclase (PycC) synthesizes cyclic nucleotides in response to infection; these serve as specific second messenger signals. The signals activate the adjacent effector, leading to bacterial cell death and abortive phage infection. A clade B Pycsar system. Its function is as follows. The effector gene of a two-gene Pycsar system. Expression of this and adjacent uridylate cyclase RsmPycC (AC A0A1V0HUX5) probably confers resistance to bacteriophage. The genes are probably only expressed in response to bacteriophage infection. Probably only responds to cUMP (produced by its cognate NTP cyclase), it may act by degrading NAD(+) and/or by impairing membrane integrity. In Rhodovulum sp. (strain MB263), this protein is Pycsar effector protein RsmPycTIR.